A 784-amino-acid polypeptide reads, in one-letter code: DNA repair and recombination protein RAD54-like (784 aa).

The disordered stretch occupies residues 1-54; that stretch reads MRRSLAPSQRGPMRPESRHSFTPPLLKKNKRSCQQELEREQELDRKRQSALRDA. The segment at 2–9 is required for chromatin remodeling, strand pairing activities and coupling of ATPase activity; the sequence is RRSLAPSQ. Ser-20 is modified (phosphoserine). Thr-22 bears the Phosphothreonine mark. Basic and acidic residues predominate over residues 36-47; that stretch reads ELEREQELDRKR. The Helicase ATP-binding domain maps to 172 to 346; sequence EGKRGNFNGC…YSLVNFVNPE (175 aa). 185-192 contributes to the ATP binding site; that stretch reads DEMGLGKT. Positions 297-300 match the DEGH box motif; sequence DEGH. Positions 503–660 constitute a Helicase C-terminal domain; sequence LLDFMLAAIR…NNESAEKHFT (158 aa). The tract at residues 751–784 is disordered; that stretch reads EEAASEQPEEKPDRRKRPSTPPSDDSADEDFLGF. A compositionally biased stretch (acidic residues) spans 775 to 784; sequence DSADEDFLGF.

This sequence belongs to the SNF2/RAD54 helicase family. As to quaternary structure, interacts (via N-terminus) with spn-A/Rad51.

The protein resides in the nucleus. Functionally, involved in mitotic DNA repair and meiotic recombination. Functions in the recombinational DNA repair pathway. Essential for interhomolog gene conversion (GC), but may have a less important role in intersister GC than spn-A/Rad51. In the presence of DNA, spn-A/Rad51 enhances the ATPase activity of okr/Rad54. The polypeptide is DNA repair and recombination protein RAD54-like (Drosophila yakuba (Fruit fly)).